The sequence spans 139 residues: Large ribosomal subunit protein uL16c (139 aa).

The interval 1–20 is disordered; sequence MLSPKRTKYRKHHRGRMKGK.

It belongs to the universal ribosomal protein uL16 family. In terms of assembly, part of the 50S ribosomal subunit.

It is found in the plastid. The protein localises to the chloroplast. In Pleurastrum terricola (Filamentous green alga), this protein is Large ribosomal subunit protein uL16c.